A 519-amino-acid chain; its full sequence is Methionine--tRNA ligase (519 aa).

The 'HIGH' region signature appears at Ala11–His21. Positions Lys299–Ser303 match the 'KMSKS' region motif. Residue Lys302 participates in ATP binding. Residues Leu500–Lys519 are disordered.

Belongs to the class-I aminoacyl-tRNA synthetase family. MetG type 2B subfamily. As to quaternary structure, monomer.

It is found in the cytoplasm. It catalyses the reaction tRNA(Met) + L-methionine + ATP = L-methionyl-tRNA(Met) + AMP + diphosphate. Its function is as follows. Is required not only for elongation of protein synthesis but also for the initiation of all mRNA translation through initiator tRNA(fMet) aminoacylation. This Mycobacterium tuberculosis (strain ATCC 25618 / H37Rv) protein is Methionine--tRNA ligase.